We begin with the raw amino-acid sequence, 76 residues long: Centromere protein W (76 aa).

Belongs to the CENP-W/WIP1 family. Heterodimer with CENPT; this dimer coassembles with CENPS-CENPX heterodimers at centromeres to form the tetrameric CENP-T-W-S-X complex, which is a subcomplex of the large constitutive centromere-associated network (CCAN, also known as the interphase centromere complex or ICEN). Interacts with NPM1.

It localises to the nucleus. The protein resides in the chromosome. The protein localises to the centromere. It is found in the kinetochore. In terms of biological role, component of the CENPA-NAC (nucleosome-associated) complex, a complex that plays a central role in assembly of kinetochore proteins, mitotic progression and chromosome segregation. The CENPA-NAC complex recruits the CENPA-CAD (nucleosome distal) complex and may be involved in incorporation of newly synthesized CENPA into centromeres. Part of a nucleosome-associated complex that binds specifically to histone H3-containing nucleosomes at the centromere, as opposed to nucleosomes containing CENPA. Component of the heterotetrameric CENP-T-W-S-X complex that binds and supercoils DNA, and plays an important role in kinetochore assembly. CENPW has a fundamental role in kinetochore assembly and function. It is one of the inner kinetochore proteins, with most further proteins binding downstream. Required for normal chromosome organization and normal progress through mitosis. The polypeptide is Centromere protein W (CENPW) (Gallus gallus (Chicken)).